An 88-amino-acid polypeptide reads, in one-letter code: UPF0297 protein SGO_2042 (88 aa).

Belongs to the UPF0297 family.

This is UPF0297 protein SGO_2042 from Streptococcus gordonii (strain Challis / ATCC 35105 / BCRC 15272 / CH1 / DL1 / V288).